Consider the following 199-residue polypeptide: Peptidyl-prolyl cis-trans isomerase CYP22 (199 aa).

Residues 35–198 form the PPIase cyclophilin-type domain; the sequence is FFDVSIGGIP…LAVVITECGE (164 aa).

The protein belongs to the cyclophilin-type PPIase family. As to expression, ubiquitous.

It catalyses the reaction [protein]-peptidylproline (omega=180) = [protein]-peptidylproline (omega=0). Functionally, PPIases accelerate the folding of proteins. It catalyzes the cis-trans isomerization of proline imidic peptide bonds in oligopeptides. This chain is Peptidyl-prolyl cis-trans isomerase CYP22 (CYP22), found in Arabidopsis thaliana (Mouse-ear cress).